The following is a 58-amino-acid chain: Alpha-conotoxin AuIB (58 aa).

An N-terminal signal peptide occupies residues 1–16; sequence MFTVFLLVVLATTVVS. A propeptide spanning residues 17-39 is cleaved from the precursor; that stretch reads FTSDRASDGRKDAASGLIALTMK. Intrachain disulfides connect cysteine 41/cysteine 47 and cysteine 42/cysteine 54. Position 54 is a cysteine amide (cysteine 54).

As to expression, expressed by the venom duct.

The protein resides in the secreted. Its function is as follows. Alpha-conotoxins act on postsynaptic membranes, they bind to the nicotinic acetylcholine receptors (nAChR) and thus inhibit them. This toxin blocks mammalian nAChR alpha-3-beta-4/CHRNA3-CHRNB4 subunits. Also exhibits inhibition of D.melanogaster alpha-7/CHRNA7 nAChRs. The sequence is that of Alpha-conotoxin AuIB from Conus aulicus (Princely cone).